We begin with the raw amino-acid sequence, 681 residues long: DNA ligase (681 aa).

NAD(+) contacts are provided by residues 35–39 (DAEYD), 84–85 (SL), and E115. The N6-AMP-lysine intermediate role is filled by K117. R138, E175, K293, and K317 together coordinate NAD(+). Zn(2+)-binding residues include C411, C414, C429, and C435. Positions 598 to 681 (RTNLAVPGKT…SLLRDTSSSE (84 aa)) constitute a BRCT domain.

This sequence belongs to the NAD-dependent DNA ligase family. LigA subfamily. The cofactor is Mg(2+). Requires Mn(2+) as cofactor.

The enzyme catalyses NAD(+) + (deoxyribonucleotide)n-3'-hydroxyl + 5'-phospho-(deoxyribonucleotide)m = (deoxyribonucleotide)n+m + AMP + beta-nicotinamide D-nucleotide.. In terms of biological role, DNA ligase that catalyzes the formation of phosphodiester linkages between 5'-phosphoryl and 3'-hydroxyl groups in double-stranded DNA using NAD as a coenzyme and as the energy source for the reaction. It is essential for DNA replication and repair of damaged DNA. This Nitrosomonas europaea (strain ATCC 19718 / CIP 103999 / KCTC 2705 / NBRC 14298) protein is DNA ligase.